The sequence spans 207 residues: MIKLTKRQSDVLETIREFISETGFPPTRAEIARRLGFKSPNAAEEHLKALCKKGAIEMLSGASRGIRLVDRASNDDPTDNLGLPVIGKVAAGYPILAQENIASHVNIPANMFSPQADYFLSVSGTSMKDIGIMEGDLLAVHKTTTVRNGQIVVARIGDEVTVKRFEQKGSIVRLIPENEEFNDIIVDLESEEFAIEGLSVGVIRQGL.

Positions 28-48 (RAEIARRLGFKSPNAAEEHLK) form a DNA-binding region, H-T-H motif. Residues serine 126 and lysine 163 each act as for autocatalytic cleavage activity in the active site.

The protein belongs to the peptidase S24 family. In terms of assembly, homodimer.

The enzyme catalyses Hydrolysis of Ala-|-Gly bond in repressor LexA.. Its function is as follows. Represses a number of genes involved in the response to DNA damage (SOS response), including recA and lexA. In the presence of single-stranded DNA, RecA interacts with LexA causing an autocatalytic cleavage which disrupts the DNA-binding part of LexA, leading to derepression of the SOS regulon and eventually DNA repair. In Marinomonas sp. (strain MWYL1), this protein is LexA repressor.